The following is a 583-amino-acid chain: MSFRLFTRTSQRLPRLNWVSPIRRYAKQPQYDEAELFAENINHGAYKAKKRPSDEHFQWPEKSPDQITKESELQWERMAKLSAVGQGILILVVVGGLGTAYLRWPELKSWWLIKMNGGRINATQEQSGQDSLEKLIRQKAKNLLREIPQVPAFQLGIDHPGVYIWGRCHSKDSLFPVRVPNLDGRKFRDILLAPSDDFNTNFAIDEKGDLISWDDLGQTKTILPDQDLTSMKYSSHFLYALNKKGEILVIPIRTPDLIASQVSSRRSKLLPWKTKLRYDWKLQTNQIFNGKEGEKRVVQFDAGSHHLVLLSNLGKAYCCATGNDQKQAQVSKGQFGIPTFSQFDEFPPNNQLFEIELLNKFKHEGEDVVRKREIKKIACGSYHTLAIDKTGEIYAFGWNRFGQLALPISYNLEYVSFPRSVTHAFKPHFPGMTNWKCVDIHCDDETSFVTIRKPGSTSDHHYFAFGNGLFGELGNNTFKNSQCDPIKIKSDDKKLTNWSCGSHCVFTETEQENEVIAWGNNDHGQLGIGKKTMKCAKPMNIPEVLKPGQDTTDLDSIYNSKLHLKKEQRVVTNGNKSCLYWRV.

A mitochondrion-targeting transit peptide spans 1 to 25 (MSFRLFTRTSQRLPRLNWVSPIRRY). A helical transmembrane segment spans residues 83–105 (AVGQGILILVVVGGLGTAYLRWP). 4 RCC1 repeats span residues 332–389 (KGQF…AIDK), 390–452 (TGEI…VTIR), 459–510 (DHHY…TETE), and 512–569 (ENEV…KEQR).

Its subcellular location is the mitochondrion membrane. The chain is Protein FMP25, mitochondrial (FMP25) from Saccharomyces cerevisiae (strain ATCC 204508 / S288c) (Baker's yeast).